A 443-amino-acid chain; its full sequence is Aspartate--tRNA(Asp/Asn) ligase (443 aa).

Glu-175 is an L-aspartate binding site. Residues Gln-197–Lys-200 are aspartate. L-aspartate is bound at residue Arg-219. ATP is bound by residues Arg-219–Glu-221, Arg-227–Leu-229, and Glu-366. 2 residues coordinate Mg(2+): Glu-366 and Ser-369. Residues Ser-369 and Arg-373 each contribute to the L-aspartate site. Residue Gly-414 to Arg-417 coordinates ATP.

This sequence belongs to the class-II aminoacyl-tRNA synthetase family. Type 2 subfamily. Homodimer. The cofactor is Mg(2+).

The protein localises to the cytoplasm. The catalysed reaction is tRNA(Asx) + L-aspartate + ATP = L-aspartyl-tRNA(Asx) + AMP + diphosphate. Its function is as follows. Aspartyl-tRNA synthetase with relaxed tRNA specificity since it is able to aspartylate not only its cognate tRNA(Asp) but also tRNA(Asn). Reaction proceeds in two steps: L-aspartate is first activated by ATP to form Asp-AMP and then transferred to the acceptor end of tRNA(Asp/Asn). This chain is Aspartate--tRNA(Asp/Asn) ligase, found in Methanococcoides burtonii (strain DSM 6242 / NBRC 107633 / OCM 468 / ACE-M).